Consider the following 838-residue polypeptide: Kinesin-like protein KIFC2 (838 aa).

Low complexity predominate over residues 23–32 (AAAAEPGDPA). Disordered stretches follow at residues 23-48 (AAAA…DLPA) and 140-185 (LLQG…GQQP). The segment covering 156-167 (DGSTSQEESPSH) has biased composition (polar residues). Residues 186–351 (LQLEEDQRAW…SLRQGCGDLR (166 aa)) are a coiled coil. Residues 409 to 740 (NIRVLCRLRP…ARRSPRGRRI (332 aa)) enclose the Kinesin motor domain. 484 to 491 (GQTGTGKT) contributes to the ATP binding site. Residues 718–792 (RSPPTRARPP…SPGPPAPLRR (75 aa)) form a disordered region.

The protein belongs to the TRAFAC class myosin-kinesin ATPase superfamily. Kinesin family.

Its subcellular location is the cytoplasm. It localises to the cytoskeleton. Its function is as follows. May play a role in microtubule-dependent retrograde axonal transport. May function as the motor for the transport of multivesicular body (MVB)-like organelles in dendrites. This chain is Kinesin-like protein KIFC2 (KIFC2), found in Homo sapiens (Human).